Reading from the N-terminus, the 259-residue chain is Zinc import ATP-binding protein ZnuC (259 aa).

In terms of domain architecture, ABC transporter spans 6–223 (VTVQSVSVTL…PAYHELFGPG (218 aa)). 38-45 (GPNGAGKS) provides a ligand contact to ATP. Residues 230–259 (ALYTHDHDHDHDLHGNATHSHDHNGPCNHD) are disordered. The segment covering 233–259 (THDHDHDHDLHGNATHSHDHNGPCNHD) has biased composition (basic and acidic residues).

It belongs to the ABC transporter superfamily. Zinc importer (TC 3.A.1.15.5) family. The complex is composed of two ATP-binding proteins (ZnuC), two transmembrane proteins (ZnuB) and a solute-binding protein (ZnuA).

It localises to the cell inner membrane. The catalysed reaction is Zn(2+)(out) + ATP(in) + H2O(in) = Zn(2+)(in) + ADP(in) + phosphate(in) + H(+)(in). Functionally, part of the ABC transporter complex ZnuABC involved in zinc import. Responsible for energy coupling to the transport system. This Alcanivorax borkumensis (strain ATCC 700651 / DSM 11573 / NCIMB 13689 / SK2) protein is Zinc import ATP-binding protein ZnuC.